The sequence spans 385 residues: Leucine aminopeptidase 1 (385 aa).

An N-terminal signal peptide occupies residues 1–19 (MKFPSFLSLGIAASTTALA). A propeptide spanning residues 20-87 (ALPDQKPIGD…FPRAFAKTAV (68 aa)) is cleaved from the precursor. Asn177 carries an N-linked (GlcNAc...) asparagine glycan. Zn(2+) is bound by residues His185 and Asp204. A glycan (N-linked (GlcNAc...) asparagine) is linked at Asn229. 2 residues coordinate Zn(2+): Glu243 and Asp270. A disulfide bridge connects residues Cys319 and Cys323. Position 352 (His352) interacts with Zn(2+).

The protein belongs to the peptidase M28 family. M28E subfamily. As to quaternary structure, monomer. Requires Zn(2+) as cofactor.

It is found in the secreted. Functionally, extracellular aminopeptidase that allows assimilation of proteinaceous substrates. This Blastomyces gilchristii (strain SLH14081) (Blastomyces dermatitidis) protein is Leucine aminopeptidase 1 (LAP1).